The primary structure comprises 350 residues: Nicotinate-nucleotide--dimethylbenzimidazole phosphoribosyltransferase (350 aa).

Glu316 serves as the catalytic Proton acceptor.

The protein belongs to the CobT family.

It catalyses the reaction 5,6-dimethylbenzimidazole + nicotinate beta-D-ribonucleotide = alpha-ribazole 5'-phosphate + nicotinate + H(+). It functions in the pathway nucleoside biosynthesis; alpha-ribazole biosynthesis; alpha-ribazole from 5,6-dimethylbenzimidazole: step 1/2. Catalyzes the synthesis of alpha-ribazole-5'-phosphate from nicotinate mononucleotide (NAMN) and 5,6-dimethylbenzimidazole (DMB). In Bradyrhizobium diazoefficiens (strain JCM 10833 / BCRC 13528 / IAM 13628 / NBRC 14792 / USDA 110), this protein is Nicotinate-nucleotide--dimethylbenzimidazole phosphoribosyltransferase.